Reading from the N-terminus, the 252-residue chain is Small ribosomal subunit protein uS3 (252 aa).

One can recognise a KH type-2 domain in the interval 16–85 (IDEYLETKLE…NPQVEVKEVD (70 aa)). Residues 233 to 252 (EESEIEEITEEIEDVETLEE) are disordered.

The protein belongs to the universal ribosomal protein uS3 family. As to quaternary structure, part of the 30S ribosomal subunit.

Its function is as follows. Binds the lower part of the 30S subunit head. The protein is Small ribosomal subunit protein uS3 of Methanosphaera stadtmanae (strain ATCC 43021 / DSM 3091 / JCM 11832 / MCB-3).